A 461-amino-acid chain; its full sequence is Probable ribonuclease FAU-1 (461 aa).

Residues 89-158 (GAVFYGEVTE…ARPSLATALR (70 aa)) enclose the S1 motif domain.

Belongs to the FAU-1 family.

In terms of biological role, probable RNase involved in rRNA stability through maturation and/or degradation of precursor rRNAs. Binds to RNA in loop regions with AU-rich sequences. The polypeptide is Probable ribonuclease FAU-1 (Natronomonas pharaonis (strain ATCC 35678 / DSM 2160 / CIP 103997 / JCM 8858 / NBRC 14720 / NCIMB 2260 / Gabara) (Halobacterium pharaonis)).